Consider the following 434-residue polypeptide: Alpha-enolase (434 aa).

Ser2 carries the post-translational modification N-acetylserine. Lys5 is subject to N6-acetyllysine. Ser27 carries the post-translational modification Phosphoserine. Positions 31–38 are epitope recognized by CAR and healthy patient antibodies; that stretch reads FRAAVPSG. Ser40 serves as a coordination point for Mg(2+). At Tyr44 the chain carries Phosphotyrosine. Residues 56-63 form an epitope recognized by CAR antibodies region; that stretch reads RYMGKGVS. Lys60 is subject to N6-acetyllysine; alternate. Lys60 is subject to N6-succinyllysine; alternate. Residues Lys64 and Lys71 each carry the N6-acetyllysine modification. Lys89 carries the post-translational modification N6-acetyllysine; alternate. Lys89 carries the post-translational modification N6-succinyllysine; alternate. Lys92 and Lys126 each carry N6-acetyllysine. The tract at residues 97–237 is required for repression of c-myc promoter activity; sequence MDGTENKSKF…KTAIGKAGYT (141 aa). His158 and Glu167 together coordinate substrate. Residues Lys193 and Lys199 each carry the N6-acetyllysine modification. Lys202 is subject to N6-acetyllysine; alternate. A Glycyl lysine isopeptide (Lys-Gly) (interchain with G-Cter in SUMO2); alternate cross-link involves residue Lys202. Glu210 acts as the Proton donor in catalysis. Lys228 and Lys233 each carry N6-acetyllysine; alternate. Position 228 is an N6-succinyllysine; alternate (Lys228). An N6-(2-hydroxyisobutyryl)lysine; alternate modification is found at Lys228. N6-malonyllysine; alternate is present on Lys233. Asp245 lines the Mg(2+) pocket. Ser254 bears the Phosphoserine mark. Residue Lys256 is modified to N6-acetyllysine. A phosphoserine mark is found at Ser263 and Ser272. The residue at position 281 (Lys281) is an N6-acetyllysine; alternate. The residue at position 281 (Lys281) is an N6-(2-hydroxyisobutyryl)lysine; alternate. N6-acetyllysine is present on Lys285. Tyr287 is subject to Phosphotyrosine. At Ser291 the chain carries Phosphoserine. Mg(2+)-binding residues include Glu293 and Asp318. Residues Glu293 and Asp318 each coordinate substrate. 2 positions are modified to N6-acetyllysine: Lys335 and Lys343. Lys343 (proton acceptor) is an active-site residue. Substrate contacts are provided by residues 370–373 and Lys394; that span reads SHRS. The segment at 405-434 is required for interaction with PLG; sequence AKYNQLLRIEEELGSKAKFAGRNFRNPLAK. An N6-acetyllysine modification is found at Lys406. At Lys420 the chain carries N6-acetyllysine; alternate. Lys420 is subject to N6-succinyllysine; alternate. At Lys420 the chain carries N6-malonyllysine; alternate.

Belongs to the enolase family. In terms of assembly, mammalian enolase is composed of 3 isozyme subunits, alpha, beta and gamma, which can form homodimers or heterodimers which are cell-type and development-specific. ENO1 interacts with PLG in the neuronal plasma membrane and promotes its activation. The C-terminal lysine is required for this binding. Isoform MBP-1 interacts with TRAPPC2B. Interacts with ENO4 and PGAM2. Interacts with CMTM6. It depends on Mg(2+) as a cofactor. Post-translationally, ISGylated. In terms of processing, lysine 2-hydroxyisobutyrylation (Khib) by p300/EP300 activates the phosphopyruvate hydratase activity. The alpha/alpha homodimer is expressed in embryo and in most adult tissues. The alpha/beta heterodimer and the beta/beta homodimer are found in striated muscle, and the alpha/gamma heterodimer and the gamma/gamma homodimer in neurons.

It localises to the cytoplasm. Its subcellular location is the cell membrane. It is found in the myofibril. The protein resides in the sarcomere. The protein localises to the m line. It localises to the nucleus. The enzyme catalyses (2R)-2-phosphoglycerate = phosphoenolpyruvate + H2O. Its pathway is carbohydrate degradation; glycolysis; pyruvate from D-glyceraldehyde 3-phosphate: step 4/5. Its function is as follows. Glycolytic enzyme the catalyzes the conversion of 2-phosphoglycerate to phosphoenolpyruvate. In addition to glycolysis, involved in various processes such as growth control, hypoxia tolerance and allergic responses. May also function in the intravascular and pericellular fibrinolytic system due to its ability to serve as a receptor and activator of plasminogen on the cell surface of several cell-types such as leukocytes and neurons. Stimulates immunoglobulin production. Binds to the myc promoter and acts as a transcriptional repressor. May be a tumor suppressor. The polypeptide is Alpha-enolase (ENO1) (Homo sapiens (Human)).